The chain runs to 54 residues: Large ribosomal subunit protein bL32c (54 aa).

The disordered stretch occupies residues 1-20 (MAVPKKKMSKSRRNSRKSNW).

It belongs to the bacterial ribosomal protein bL32 family.

It localises to the plastid. The protein localises to the chloroplast. The polypeptide is Large ribosomal subunit protein bL32c (rpl32) (Euglena gracilis).